Consider the following 1755-residue polypeptide: Transposon Ty1-LR3 Gag-Pol polyprotein (1755 aa).

Residues 1 to 16 (MESQQLSQHSHISHGS) are compositionally biased toward low complexity. Disordered regions lie at residues 1–93 (MESQ…MMTQ), 126–173 (PQSQ…RPPP), and 352–421 (GSRN…SKST). Composition is skewed to polar residues over residues 48-60 (TKANSQQTTTPAS) and 127-152 (QSQFPQYPSSVGTPLSTPSPESGNTF). Residues 153-165 (TDSSSADSDMTST) show a composition bias toward low complexity. Residues 299–401 (NNGIHINNKV…NSKSKTARAH (103 aa)) form an RNA-binding region. A compositionally biased stretch (low complexity) spans 402–418 (NVSTSNNSPSTDNDSIS). Phosphoserine is present on Ser416. Asp461 (for protease activity; shared with dimeric partner) is an active-site residue. The interval 583–640 (NVHTSESTRKYPYPFIHRMLAHANAQTIRYSLKNNTITYFNESDVDWSSAIDYQCPDC) is integrase-type zinc finger-like. Residues 660-829 (NSYEPFQYLH…SQHAGLAGLD (170 aa)) form the Integrase catalytic domain. 2 residues coordinate Mg(2+): Asp671 and Asp736. Disordered stretches follow at residues 956–1087 (SKAV…ETEK), 1092–1111 (RSPSIDASPPENNSSHNIVP), and 1129–1172 (ADLP…SNAY). Positions 960–969 (SPTDSTPPST) are enriched in low complexity. Polar residues predominate over residues 1005–1015 (STPQISNIEST). The segment covering 1038 to 1052 (ESSHASKSKDFRHSD) has biased composition (basic and acidic residues). Polar residues-rich tracts occupy residues 1053–1082 (SYSNNETNHTNVPISSTGGTNNKTVPQISD) and 1101–1111 (PENNSSHNIVP). The Bipartite nuclear localization signal signature appears at 1178–1212 (KKRSLEDNETEIKVSRDTWNTKNMRSLEPPRSKKR). The 139-residue stretch at 1338–1476 (NNYYITQLDI…DILGLEIKYQ (139 aa)) folds into the Reverse transcriptase Ty1/copia-type domain. 6 residues coordinate Mg(2+): Asp1346, Asp1427, Asp1428, Asp1610, Glu1652, and Asp1685. The region spanning 1610 to 1752 (DASYGNQPYY…IKTFKLLTNK (143 aa)) is the RNase H Ty1/copia-type domain.

In terms of assembly, the capsid protein forms a homotrimer, from which the VLPs are assembled. The protease is a homodimer, whose active site consists of two apposed aspartic acid residues. In terms of processing, initially, virus-like particles (VLPs) are composed of the structural unprocessed proteins Gag and Gag-Pol, and also contain the host initiator methionine tRNA (tRNA(i)-Met) which serves as a primer for minus-strand DNA synthesis, and a dimer of genomic Ty RNA. Processing of the polyproteins occurs within the particle and proceeds by an ordered pathway, called maturation. First, the protease (PR) is released by autocatalytic cleavage of the Gag-Pol polyprotein yielding capsid protein p45 and a Pol-p154 precursor protein. This cleavage is a prerequisite for subsequent processing of Pol-p154 at the remaining sites to release the mature structural and catalytic proteins. Maturation takes place prior to the RT reaction and is required to produce transposition-competent VLPs.

Its subcellular location is the cytoplasm. The protein resides in the nucleus. It catalyses the reaction DNA(n) + a 2'-deoxyribonucleoside 5'-triphosphate = DNA(n+1) + diphosphate. The catalysed reaction is Endonucleolytic cleavage to 5'-phosphomonoester.. Capsid protein (CA) is the structural component of the virus-like particle (VLP), forming the shell that encapsulates the retrotransposons dimeric RNA genome. The particles are assembled from trimer-clustered units and there are holes in the capsid shells that allow for the diffusion of macromolecules. CA also has nucleocapsid-like chaperone activity, promoting primer tRNA(i)-Met annealing to the multipartite primer-binding site (PBS), dimerization of Ty1 RNA and initiation of reverse transcription. In terms of biological role, the aspartyl protease (PR) mediates the proteolytic cleavages of the Gag and Gag-Pol polyproteins after assembly of the VLP. Its function is as follows. Reverse transcriptase/ribonuclease H (RT) is a multifunctional enzyme that catalyzes the conversion of the retro-elements RNA genome into dsDNA within the VLP. The enzyme displays a DNA polymerase activity that can copy either DNA or RNA templates, and a ribonuclease H (RNase H) activity that cleaves the RNA strand of RNA-DNA heteroduplexes during plus-strand synthesis and hydrolyzes RNA primers. The conversion leads to a linear dsDNA copy of the retrotransposon that includes long terminal repeats (LTRs) at both ends. Functionally, integrase (IN) targets the VLP to the nucleus, where a subparticle preintegration complex (PIC) containing at least integrase and the newly synthesized dsDNA copy of the retrotransposon must transit the nuclear membrane. Once in the nucleus, integrase performs the integration of the dsDNA into the host genome. The protein is Transposon Ty1-LR3 Gag-Pol polyprotein (TY1B-LR3) of Saccharomyces cerevisiae (strain ATCC 204508 / S288c) (Baker's yeast).